A 686-amino-acid chain; its full sequence is Potassium-transporting ATPase ATP-binding subunit (686 aa).

2 consecutive transmembrane segments (helical) span residues 38–58 and 64–84; these read VMFV…KDLV and AAPL…VLFA. A disordered region spans residues 101-123; that stretch reads ALRKMRKETTARRWKDGREERVP. A compositionally biased stretch (basic and acidic residues) spans 107 to 123; that stretch reads KETTARRWKDGREERVP. Helical transmembrane passes span 224-244 and 257-277; these read ILLV…VPLA and VALL…AIGI. The 4-aspartylphosphate intermediate role is filled by aspartate 308. ATP contacts are provided by residues aspartate 345, glutamate 349, 378-385, and lysine 399; that span reads FTAQTRMS. Mg(2+) contacts are provided by aspartate 522 and aspartate 526. The next 3 membrane-spanning stretches (helical) occupy residues 592–612, 620–640, and 666–686; these read FAIL…LNVM, AVLS…PLAL, and VIVP…VGLA.

This sequence belongs to the cation transport ATPase (P-type) (TC 3.A.3) family. Type IA subfamily. In terms of assembly, the system is composed of three essential subunits: KdpA, KdpB and KdpC.

Its subcellular location is the cell membrane. It carries out the reaction K(+)(out) + ATP + H2O = K(+)(in) + ADP + phosphate + H(+). Part of the high-affinity ATP-driven potassium transport (or Kdp) system, which catalyzes the hydrolysis of ATP coupled with the electrogenic transport of potassium into the cytoplasm. This subunit is responsible for energy coupling to the transport system and for the release of the potassium ions to the cytoplasm. In Myxococcus xanthus, this protein is Potassium-transporting ATPase ATP-binding subunit.